Here is a 169-residue protein sequence, read N- to C-terminus: Phosphopantetheine adenylyltransferase (169 aa).

A substrate-binding site is contributed by serine 10. Residues 10–11 (SF) and histidine 18 each bind ATP. The substrate site is built by lysine 42, threonine 79, and arginine 93. Residues 94–96 (GLR), glutamate 104, and 129–135 (VRPITAT) contribute to the ATP site.

Belongs to the bacterial CoaD family. As to quaternary structure, homohexamer. Mg(2+) is required as a cofactor.

It is found in the cytoplasm. The catalysed reaction is (R)-4'-phosphopantetheine + ATP + H(+) = 3'-dephospho-CoA + diphosphate. Its pathway is cofactor biosynthesis; coenzyme A biosynthesis; CoA from (R)-pantothenate: step 4/5. Its function is as follows. Reversibly transfers an adenylyl group from ATP to 4'-phosphopantetheine, yielding dephospho-CoA (dPCoA) and pyrophosphate. This Rhodopseudomonas palustris (strain ATCC BAA-98 / CGA009) protein is Phosphopantetheine adenylyltransferase.